Consider the following 430-residue polypeptide: Ribosomal protein uS12 methylthiotransferase RimO (430 aa).

In terms of domain architecture, MTTase N-terminal spans 1-116; sequence MRVGIKVLGC…IANAIENGTD (116 aa). [4Fe-4S] cluster-binding residues include Cys10, Cys46, Cys79, Cys148, Cys152, and Cys155. In terms of domain architecture, Radical SAM core spans 134–365; that stretch reads LEERPYAYVK…LLQAEISNSR (232 aa). The region spanning 367–430 is the TRAM domain; it reads DRFVGKKLKF…DEYDMWGSVI (64 aa).

Belongs to the methylthiotransferase family. RimO subfamily. In terms of assembly, monomer. Requires [4Fe-4S] cluster as cofactor.

It is found in the cytoplasm. The catalysed reaction is L-aspartate(89)-[ribosomal protein uS12]-hydrogen + (sulfur carrier)-SH + AH2 + 2 S-adenosyl-L-methionine = 3-methylsulfanyl-L-aspartate(89)-[ribosomal protein uS12]-hydrogen + (sulfur carrier)-H + 5'-deoxyadenosine + L-methionine + A + S-adenosyl-L-homocysteine + 2 H(+). Its function is as follows. Catalyzes the methylthiolation of an aspartic acid residue of ribosomal protein uS12. The chain is Ribosomal protein uS12 methylthiotransferase RimO from Thermotoga maritima (strain ATCC 43589 / DSM 3109 / JCM 10099 / NBRC 100826 / MSB8).